The chain runs to 143 residues: Transcriptional regulator MraZ (143 aa).

SpoVT-AbrB domains are found at residues 6 to 49 and 78 to 121; these read TYNH…NEAE and SDET…DLKV.

The protein belongs to the MraZ family. Forms oligomers.

It is found in the cytoplasm. Its subcellular location is the nucleoid. This Spiroplasma kunkelii protein is Transcriptional regulator MraZ.